Here is a 364-residue protein sequence, read N- to C-terminus: Histidinol-phosphate aminotransferase (364 aa).

Residue K226 is modified to N6-(pyridoxal phosphate)lysine.

Belongs to the class-II pyridoxal-phosphate-dependent aminotransferase family. Histidinol-phosphate aminotransferase subfamily. Homodimer. It depends on pyridoxal 5'-phosphate as a cofactor.

It carries out the reaction L-histidinol phosphate + 2-oxoglutarate = 3-(imidazol-4-yl)-2-oxopropyl phosphate + L-glutamate. The protein operates within amino-acid biosynthesis; L-histidine biosynthesis; L-histidine from 5-phospho-alpha-D-ribose 1-diphosphate: step 7/9. This chain is Histidinol-phosphate aminotransferase, found in Sulfurimonas denitrificans (strain ATCC 33889 / DSM 1251) (Thiomicrospira denitrificans (strain ATCC 33889 / DSM 1251)).